The sequence spans 131 residues: Maturin (131 aa).

At Tyr-34 the chain carries Phosphotyrosine. Acidic residues predominate over residues 107–120 (FEEYSADVEEEEPE). The interval 107–131 (FEEYSADVEEEEPEADHPQMGVSQQ) is disordered.

The protein belongs to the MTURN family. In terms of processing, phosphorylation at Tyr-34 is essential for its ability to promote megakaryocyte differentiation.

It localises to the cytoplasm. In terms of biological role, promotes megakaryocyte differentiation by enhancing ERK and JNK signaling as well as up-regulating RUNX1 and FLI1 expression. Represses NF-kappa-B transcriptional activity by inhibiting phosphorylation of RELA at 'Ser- 536'. May be involved in early neuronal development. The protein is Maturin (Mturn) of Rattus norvegicus (Rat).